A 210-amino-acid polypeptide reads, in one-letter code: Large ribosomal subunit protein uL4 (210 aa).

Residues 44–54 show a composition bias toward polar residues; that stretch reads KRQGTASTLTR. A disordered region spans residues 44–85; that stretch reads KRQGTASTLTRSEVRGGGRKPYKQKGTGRARQGSIRTPLRPG. The span at 60–71 shows a compositional bias: basic residues; sequence GGRKPYKQKGTG.

Belongs to the universal ribosomal protein uL4 family. As to quaternary structure, part of the 50S ribosomal subunit.

One of the primary rRNA binding proteins, this protein initially binds near the 5'-end of the 23S rRNA. It is important during the early stages of 50S assembly. It makes multiple contacts with different domains of the 23S rRNA in the assembled 50S subunit and ribosome. Its function is as follows. Forms part of the polypeptide exit tunnel. This chain is Large ribosomal subunit protein uL4, found in Prochlorococcus marinus (strain MIT 9301).